Consider the following 301-residue polypeptide: NADH-cytochrome b5 reductase 3 (301 aa).

The N-myristoyl glycine moiety is linked to residue glycine 2. Residues 40–152 (DIKYPLRLID…RGPNGLLVYQ (113 aa)) form the FAD-binding FR-type domain. Lysine 42 carries the N6-acetyllysine modification. Position 43 is a phosphotyrosine (tyrosine 43). Lysine 50 is subject to N6-acetyllysine. The FAD site is built by arginine 92, proline 93, tyrosine 94, valine 109, lysine 111, and phenylalanine 114. Lysine 120 carries the post-translational modification N6-acetyllysine. Positions 126, 127, 128, and 185 each coordinate FAD.

It belongs to the flavoprotein pyridine nucleotide cytochrome reductase family. Component of a complex composed of cytochrome b5, NADH-cytochrome b5 reductase (CYB5R3) and MTARC2. Interacts with MTLN; the interaction is required to maintain cellular lipid composition and leads to stimulation of mitochondrial respiratory complex I activity. The cofactor is FAD.

The protein resides in the endoplasmic reticulum membrane. It is found in the mitochondrion outer membrane. The enzyme catalyses 2 Fe(III)-[cytochrome b5] + NADH = 2 Fe(II)-[cytochrome b5] + NAD(+) + H(+). In terms of biological role, catalyzes the reduction of two molecules of cytochrome b5 using NADH as the electron donor. This chain is NADH-cytochrome b5 reductase 3 (CYB5R3), found in Bos taurus (Bovine).